A 256-amino-acid polypeptide reads, in one-letter code: Small ribosomal subunit protein eS1 (256 aa).

An N-acetylalanine; partial modification is found at Ala2.

The protein belongs to the eukaryotic ribosomal protein eS1 family. Component of the small ribosomal subunit. Mature ribosomes consist of a small (40S) and a large (60S) subunit. The 40S subunit contains about 33 different proteins and 1 molecule of RNA (18S). The 60S subunit contains about 49 different proteins and 3 molecules of RNA (25S, 5.8S and 5S).

It localises to the cytoplasm. The sequence is that of Small ribosomal subunit protein eS1 from Candida albicans (strain SC5314 / ATCC MYA-2876) (Yeast).